The following is a 196-amino-acid chain: uncharacterized protein (196 aa).

This sequence belongs to the NAD(P)H dehydrogenase (quinone) family.

This is an uncharacterized protein from Escherichia coli (strain K12).